The primary structure comprises 86 residues: Small muscular protein (86 aa).

The interval 20–64 (MGAFRPGAGQPPRKKECTPETEEAVLPTSDEEKKPIPGAKKLPGP) is disordered.

This sequence belongs to the SMPX family. High level of expression found in the heart and skeletal muscle, a very low expression in the lung and spleen and no expression found in the liver, kidney, fat and brain.

Its function is as follows. Plays a role in the regulatory network through which muscle cells coordinate their structural and functional states during growth, adaptation, and repair. The protein is Small muscular protein (SMPX) of Sus scrofa (Pig).